Consider the following 326-residue polypeptide: Malate dehydrogenase (326 aa).

Residue 12-18 (GAAGQIA) participates in NAD(+) binding. Substrate is bound by residues R93 and R99. Residues N106, Q113, and 130–132 (VGN) each bind NAD(+). The substrate site is built by N132 and R163. H188 serves as the catalytic Proton acceptor.

The protein belongs to the LDH/MDH superfamily. MDH type 2 family.

It catalyses the reaction (S)-malate + NAD(+) = oxaloacetate + NADH + H(+). Catalyzes the reversible oxidation of malate to oxaloacetate. The chain is Malate dehydrogenase from Corynebacterium diphtheriae (strain ATCC 700971 / NCTC 13129 / Biotype gravis).